Reading from the N-terminus, the 181-residue chain is MGLSFTKLFSRLFAKKEMRILMVGLDAAGKTTILYQLKLGEIVTTIPTIGFNVETVEYQYISFTVWDVGGQDKIRPLWRHYFQNTQGLIFVVDSNDRDRVVEARDELHRMLNEDELRDAVLLVFANKQDLPNAMNAAEITDKHGLHSLRQRHWYIQSTCATSGEGLYEGLDWLSNNIANKA.

The N-myristoyl glycine moiety is linked to residue glycine 2. GTP is bound by residues 24 to 31 (GLDAAGKT), 67 to 71 (DVGGQ), and 126 to 129 (NKQD).

It belongs to the small GTPase superfamily. Arf family.

It is found in the golgi apparatus. It carries out the reaction GTP + H2O = GDP + phosphate + H(+). Functionally, GTP-binding protein involved in protein trafficking; may modulate vesicle budding and uncoating within the Golgi apparatus. This is ADP-ribosylation factor 1 (ARF1) from Catharanthus roseus (Madagascar periwinkle).